A 101-amino-acid chain; its full sequence is Apolipoprotein C-II (101 aa).

The first 26 residues, 1 to 26 (MGTRYFLALFLILLVLGFKVQGVAMA), serve as a signal peptide directing secretion. Residues 66-74 (TMDEKIRDI) form a lipid binding region. Residues 78 to 101 (STAAVTTYAGIFTDQLLSLLKGDQ) form a lipoprotein lipase cofactor region.

The protein belongs to the apolipoprotein C2 family. Post-translationally, proapolipoprotein C-II is synthesized as a sialic acid containing glycoprotein which is subsequently desialylated prior to its proteolytic processing. Proapolipoprotein C-II undergoes proteolytic cleavage of its N-terminal hexapeptide to generate apolipoprotein C-II. In bovine, proapolipoprotein C-II was found to be the minor form whereas apolipoprotein C-II was found to be the major form in plasma.

The protein resides in the secreted. Component of chylomicrons, very low-density lipoproteins (VLDL), low-density lipoproteins (LDL), and high-density lipoproteins (HDL) in plasma. Plays an important role in lipoprotein metabolism as an activator of lipoprotein lipase. Both proapolipoprotein C-II and apolipoprotein C-II can activate lipoprotein lipase. The chain is Apolipoprotein C-II (APOC2) from Camelus dromedarius (Dromedary).